A 305-amino-acid polypeptide reads, in one-letter code: NADH-cytochrome b5 reductase 1 (305 aa).

A helical membrane pass occupies residues Val8–Tyr28. Positions Asn44–Ala156 constitute an FAD-binding FR-type domain. FAD contacts are provided by residues Asp136 to Asn166 and Val175 to Leu210.

The protein belongs to the flavoprotein pyridine nucleotide cytochrome reductase family. Requires FAD as cofactor.

Its subcellular location is the membrane. It catalyses the reaction 2 Fe(III)-[cytochrome b5] + NADH = 2 Fe(II)-[cytochrome b5] + NAD(+) + H(+). NADH-cytochrome b5 reductases are involved in desaturation and elongation of fatty acids, cholesterol biosynthesis, drug metabolism, and, in erythrocyte, methemoglobin reduction. The chain is NADH-cytochrome b5 reductase 1 (CYB5R1) from Bos taurus (Bovine).